The sequence spans 235 residues: Lipoprotein signal peptidase (235 aa).

Residues 1–23 (MTDETSGPAEPVTDAPGDAESPA) are disordered. 3 helical membrane-spanning segments follow: residues 31 to 51 (LLLT…VLAV), 84 to 104 (GYTW…IWMG), and 108 to 128 (VSPW…GNLV). Residues Asp144 and Asp158 contribute to the active site. A helical membrane pass occupies residues 156–176 (VADPSVVGGAILLVALSLFGF). Residues 185–235 (RPGEDAEPSAGASDSTPEAPAADGPDKPAGPVGPEDAAEESKTVGHQAEPS) form a disordered region. Residues 201–218 (PEAPAADGPDKPAGPVGP) are compositionally biased toward low complexity.

Belongs to the peptidase A8 family.

The protein localises to the cell membrane. The enzyme catalyses Release of signal peptides from bacterial membrane prolipoproteins. Hydrolyzes -Xaa-Yaa-Zaa-|-(S,diacylglyceryl)Cys-, in which Xaa is hydrophobic (preferably Leu), and Yaa (Ala or Ser) and Zaa (Gly or Ala) have small, neutral side chains.. It participates in protein modification; lipoprotein biosynthesis (signal peptide cleavage). This protein specifically catalyzes the removal of signal peptides from prolipoproteins. The polypeptide is Lipoprotein signal peptidase (Mycolicibacterium smegmatis (strain ATCC 700084 / mc(2)155) (Mycobacterium smegmatis)).